A 445-amino-acid polypeptide reads, in one-letter code: Solute carrier family 52, riboflavin transporter, member 2 (445 aa).

The next 6 helical transmembrane spans lie at L14–L34, L47–L67, V86–A106, V112–F132, F147–V167, and F196–L216. A disordered region spans residues E228–P264. Positions S247–A258 are enriched in low complexity. A run of 5 helical transmembrane segments spans residues A277–V297, L312–L332, L339–L359, V366–F386, and A404–F424.

This sequence belongs to the riboflavin transporter family. As to expression, highly expressed in brain, fetal brain and salivary gland. Weakly expressed in other tissues.

The protein localises to the cell membrane. It carries out the reaction riboflavin(in) = riboflavin(out). Its activity is regulated as follows. Riboflavin transport is Na(+)-independent but moderately pH-sensitive. Activity is strongly inhibited by riboflavin analogs, such as lumiflavin. Weakly inhibited by flavin adenine dinucleotide (FAD) and flavin mononucleotide (FMN). In terms of biological role, plasma membrane transporter mediating the uptake by cells of the water soluble vitamin B2/riboflavin that plays a key role in biochemical oxidation-reduction reactions of the carbohydrate, lipid, and amino acid metabolism. Humans are unable to synthesize vitamin B2/riboflavin and must obtain it via intestinal absorption. May also act as a receptor for 4-hydroxybutyrate. Its function is as follows. (Microbial infection) In case of infection by retroviruses, acts as a cell receptor to retroviral envelopes similar to the porcine endogenous retrovirus (PERV-A). This is Solute carrier family 52, riboflavin transporter, member 2 (SLC52A2) from Homo sapiens (Human).